We begin with the raw amino-acid sequence, 176 residues long: Protein MAL2 (176 aa).

At Met1–Thr34 the chain is on the cytoplasmic side. Positions Ile31–Arg175 constitute an MARVEL domain. The chain crosses the membrane as a helical span at residues Tyr35–Ala55. Residues Ser56–Gly66 lie on the Lumenal side of the membrane. The chain crosses the membrane as a helical span at residues Trp67–Leu87. The Cytoplasmic portion of the chain corresponds to Ser88–Asp102. The helical transmembrane segment at Phe103 to Ala123 threads the bilayer. Topologically, residues Thr124–Asn149 are lumenal. Residue Asn132 is glycosylated (N-linked (GlcNAc...) asparagine). The chain crosses the membrane as a helical span at residues Val150–Ala170. Over Leu171 to Pro176 the chain is Cytoplasmic.

The protein belongs to the MAL family. In terms of assembly, interacts with TPD52L2.

The protein localises to the cell membrane. It is found in the apical cell membrane. Member of the machinery of polarized transport. Required for the indirect transcytotic route at the step of the egress of the transcytosing cargo from perinuclear endosomes in order for it to travel to the apical surface via a raft-dependent pathway. In Pongo abelii (Sumatran orangutan), this protein is Protein MAL2 (MAL2).